Reading from the N-terminus, the 185-residue chain is Ribosome-recycling factor (185 aa).

Belongs to the RRF family.

It localises to the cytoplasm. In terms of biological role, responsible for the release of ribosomes from messenger RNA at the termination of protein biosynthesis. May increase the efficiency of translation by recycling ribosomes from one round of translation to another. The protein is Ribosome-recycling factor of Wolbachia sp. subsp. Brugia malayi (strain TRS).